The following is a 91-amino-acid chain: Bacterial microcompartment shell vertex protein PduN (91 aa).

A BMV domain is found at methionine 1 to aspartate 87.

It belongs to the CcmL/EutN family. In terms of assembly, homopentamer. Interacts with shell protein PduA.

The protein localises to the bacterial microcompartment. Its pathway is polyol metabolism; 1,2-propanediol degradation. Probably forms vertices in the shell of the bacterial microcompartment (BMC) dedicated to 1,2-propanediol (1,2-PD) degradation. Required for structural integrity of BMCs and to mitigate propionaldehyde toxicity. Functionally, the 1,2-PD-specific bacterial microcompartment (BMC) concentrates low levels of 1,2-PD catabolic enzymes, concentrates volatile reaction intermediates thus enhancing pathway flux and keeps the level of toxic, mutagenic propionaldehyde low. In Salmonella typhimurium (strain LT2 / SGSC1412 / ATCC 700720), this protein is Bacterial microcompartment shell vertex protein PduN.